Here is a 312-residue protein sequence, read N- to C-terminus: Transcription initiation factor IIB-2 (312 aa).

A TFIIB-type zinc finger spans residues 2–34 (SDAFCSDCKRHTEVVFDHSAGDTVCSECGLVLE). Residues Cys6, Cys9, Cys26, and Cys29 each contribute to the Zn(2+) site. Tandem repeats lie at residues 115–192 (MADR…YIVK) and 216–290 (FCSN…DLYP).

Belongs to the TFIIB family. In terms of assembly, associates with TFIID-IIA (DA complex) to form TFIID-IIA-IIB (DAB-complex) which is then recognized by polymerase II.

The protein localises to the nucleus. In terms of biological role, general factor that plays a major role in the activation of eukaryotic genes transcribed by RNA polymerase II. The polypeptide is Transcription initiation factor IIB-2 (TFIIB2) (Arabidopsis thaliana (Mouse-ear cress)).